Consider the following 319-residue polypeptide: Acetyl-coenzyme A carboxylase carboxyl transferase subunit alpha (319 aa).

Positions 35–296 (NLDEEVQRLR…KAQLLADLLD (262 aa)) constitute a CoA carboxyltransferase C-terminal domain.

Belongs to the AccA family. In terms of assembly, acetyl-CoA carboxylase is a heterohexamer composed of biotin carboxyl carrier protein (AccB), biotin carboxylase (AccC) and two subunits each of ACCase subunit alpha (AccA) and ACCase subunit beta (AccD).

It localises to the cytoplasm. The catalysed reaction is N(6)-carboxybiotinyl-L-lysyl-[protein] + acetyl-CoA = N(6)-biotinyl-L-lysyl-[protein] + malonyl-CoA. Its pathway is lipid metabolism; malonyl-CoA biosynthesis; malonyl-CoA from acetyl-CoA: step 1/1. Functionally, component of the acetyl coenzyme A carboxylase (ACC) complex. First, biotin carboxylase catalyzes the carboxylation of biotin on its carrier protein (BCCP) and then the CO(2) group is transferred by the carboxyltransferase to acetyl-CoA to form malonyl-CoA. The chain is Acetyl-coenzyme A carboxylase carboxyl transferase subunit alpha from Pectobacterium atrosepticum (strain SCRI 1043 / ATCC BAA-672) (Erwinia carotovora subsp. atroseptica).